Consider the following 659-residue polypeptide: Exocyst complex component 5 (659 aa).

The stretch at 1–58 forms a coiled coil; it reads MRFEEEIGSLQMLCDQFQNKINTLEKQMNEEKKDYVQKLHRLHEKNGEAIDKMKQLDH.

The protein belongs to the SEC10 family. As to quaternary structure, the exocyst complex is composed of sec-3/exoc1, sec-5/exoc2, sec-6/exoc3, sec-8/exoc4, sec-10/exoc5, sec-15/exoc6, exo-70/exoc7 and exo-84/exoc8.

Its function is as follows. Component of the exocyst complex involved in the docking of exocytic vesicles with fusion sites on the plasma membrane. This Caenorhabditis elegans protein is Exocyst complex component 5 (sec-10).